The chain runs to 222 residues: 2-C-methyl-D-erythritol 4-phosphate cytidylyltransferase (222 aa).

Belongs to the IspD/TarI cytidylyltransferase family. IspD subfamily.

It catalyses the reaction 2-C-methyl-D-erythritol 4-phosphate + CTP + H(+) = 4-CDP-2-C-methyl-D-erythritol + diphosphate. The protein operates within isoprenoid biosynthesis; isopentenyl diphosphate biosynthesis via DXP pathway; isopentenyl diphosphate from 1-deoxy-D-xylulose 5-phosphate: step 2/6. In terms of biological role, catalyzes the formation of 4-diphosphocytidyl-2-C-methyl-D-erythritol from CTP and 2-C-methyl-D-erythritol 4-phosphate (MEP). This is 2-C-methyl-D-erythritol 4-phosphate cytidylyltransferase from Thermotoga neapolitana (strain ATCC 49049 / DSM 4359 / NBRC 107923 / NS-E).